We begin with the raw amino-acid sequence, 512 residues long: Maturase K (512 aa).

It belongs to the intron maturase 2 family. MatK subfamily.

The protein resides in the plastid. The protein localises to the chloroplast. Its function is as follows. Usually encoded in the trnK tRNA gene intron. Probably assists in splicing its own and other chloroplast group II introns. The polypeptide is Maturase K (Ginkgo biloba (Ginkgo)).